A 207-amino-acid polypeptide reads, in one-letter code: Large ribosomal subunit protein uL4 (207 aa).

The tract at residues 59–78 (GSGKKPFKQKGTGQARQGCK) is disordered.

It belongs to the universal ribosomal protein uL4 family. As to quaternary structure, part of the 50S ribosomal subunit.

Its function is as follows. One of the primary rRNA binding proteins, this protein initially binds near the 5'-end of the 23S rRNA. It is important during the early stages of 50S assembly. It makes multiple contacts with different domains of the 23S rRNA in the assembled 50S subunit and ribosome. In terms of biological role, forms part of the polypeptide exit tunnel. In Geotalea daltonii (strain DSM 22248 / JCM 15807 / FRC-32) (Geobacter daltonii), this protein is Large ribosomal subunit protein uL4.